Here is a 430-residue protein sequence, read N- to C-terminus: Asparagine--tRNA ligase (430 aa).

Belongs to the class-II aminoacyl-tRNA synthetase family. Homodimer.

It is found in the cytoplasm. The catalysed reaction is tRNA(Asn) + L-asparagine + ATP = L-asparaginyl-tRNA(Asn) + AMP + diphosphate + H(+). This chain is Asparagine--tRNA ligase, found in Staphylococcus aureus (strain USA300).